Consider the following 229-residue polypeptide: MNESIVISLGGSVISGDPIDADYMKSFARILEASKYRRVGIVTGGGRTARSYISVLRKLNVNENVLDEIGIYATRMNALSMASLIPGSNPTIPFTVEDAVNLMNTYRFVVMGGTEPGHTTDTVAALLCERSATRTLINVTSVDGVYDMDPHRFANAKRFDRIGYREAIALSTKSSAGAGPNVFMDITALTIAMRSRIRVIVTSRDIDNLEKILKGDRAVSTFIDDDQRS.

11 to 12 (GS) contributes to the ATP binding site. Glycine 45 contributes to the UMP binding site. ATP contacts are provided by glycine 46 and arginine 50. UMP-binding positions include aspartate 67 and 114–120 (TEPGHTT). Residues threonine 140, tyrosine 146, and aspartate 149 each coordinate ATP.

This sequence belongs to the UMP kinase family. As to quaternary structure, homohexamer.

It localises to the cytoplasm. It carries out the reaction UMP + ATP = UDP + ADP. The protein operates within pyrimidine metabolism; CTP biosynthesis via de novo pathway; UDP from UMP (UMPK route): step 1/1. With respect to regulation, inhibited by UTP. Its function is as follows. Catalyzes the reversible phosphorylation of UMP to UDP. The chain is Uridylate kinase from Thermoplasma acidophilum (strain ATCC 25905 / DSM 1728 / JCM 9062 / NBRC 15155 / AMRC-C165).